The primary structure comprises 221 residues: Ependymin (221 aa).

A signal peptide spans 1–21 (MQAFAVAALSIWLCLGATTLA). N-linked (GlcNAc...) asparagine glycans are attached at residues Asn37, Asn77, and Asn101.

The protein belongs to the ependymin family. Forms disulfide-linked dimers. Binds calcium through the terminal sialic acids. EPDs are synthesized in the meninx and secreted in the cerebrospinal fluid.

The protein resides in the secreted. Its function is as follows. May play a role in neural plasticity. May be involved during axon regeneration. This chain is Ependymin (epd), found in Esox lucius (Northern pike).